The sequence spans 184 residues: Outer-membrane lipoprotein carrier protein (184 aa).

The first 19 residues, 1–19 (MRAFLKILMVLIFMSVAYA), serve as a signal peptide directing secretion.

This sequence belongs to the LolA family. As to quaternary structure, monomer.

It is found in the periplasm. In terms of biological role, participates in the translocation of lipoproteins from the inner membrane to the outer membrane. Only forms a complex with a lipoprotein if the residue after the N-terminal Cys is not an aspartate (The Asp acts as a targeting signal to indicate that the lipoprotein should stay in the inner membrane). The protein is Outer-membrane lipoprotein carrier protein of Helicobacter pylori (strain HPAG1).